A 157-amino-acid polypeptide reads, in one-letter code: Putative electron transport protein YsaA (157 aa).

4 consecutive 4Fe-4S ferredoxin-type domains span residues 2–32 (NRFI…NQDC), 48–80 (KDHC…REHG), 80–109 (GHIF…VVSS), and 112–144 (KARA…CMDV). 16 residues coordinate [4Fe-4S] cluster: Cys12, Cys15, Cys18, Cys22, Cys58, Cys61, Cys66, Cys70, Cys89, Cys92, Cys95, Cys99, Cys118, Cys121, Cys130, and Cys134.

This is Putative electron transport protein YsaA (ysaA) from Escherichia coli (strain K12).